Consider the following 437-residue polypeptide: MSMFLDTAKIKVKAGKGGDGMVAFRREKYVPNGGPWGGDGGHGGNVVFVVDEGLRTLMDFRYHRRFKADDGEKGMTKGMHGRGAEDLIVRVPQGTTVRDADTGKIITDLVENGQEFVIAHGGRGGRGNIRFATPKNPAPEISENGEPGEERNLELELKVLADVGLVGFPSVGKSTLLSVITAAKPKIGAYHFTTIVPNLGMVRTKSGESFAVADLPGLIEGASQGVGLGTQFLRHIERTRVILHVLDMSASEGRDPYEDYVAINNELETYNLRLMERPQIIVANKMDMPEAEEHLEEFKKKLATNYDEFEELPQIFPISGIAHQGLENLLEATAELLEKTPEFLLYDESDFQEEEAYYGFNPDEPEFAISRADDASWILSGDKLEKLFTMTNFDRDESVMKFARQLRGMGVDEALRARGAKDGDIVRIGKFEFEFVD.

Residues 2-160 (SMFLDTAKIK…RNLELELKVL (159 aa)) enclose the Obg domain. The region spanning 161–338 (ADVGLVGFPS…LLEATAELLE (178 aa)) is the OBG-type G domain. GTP-binding positions include 167-174 (GFPSVGKS), 192-196 (FTTIV), 214-217 (DLPG), 284-287 (NKMD), and 319-321 (SGI). Positions 174 and 194 each coordinate Mg(2+). Positions 359–437 (GFNPDEPEFA…IGKFEFEFVD (79 aa)) constitute an OCT domain.

Belongs to the TRAFAC class OBG-HflX-like GTPase superfamily. OBG GTPase family. As to quaternary structure, monomer. It depends on Mg(2+) as a cofactor.

The protein resides in the cytoplasm. In terms of biological role, an essential GTPase which binds GTP, GDP and possibly (p)ppGpp with moderate affinity, with high nucleotide exchange rates and a fairly low GTP hydrolysis rate. Plays a role in control of the cell cycle, stress response, ribosome biogenesis and in those bacteria that undergo differentiation, in morphogenesis control. This is GTPase Obg from Streptococcus suis (strain 05ZYH33).